The primary structure comprises 490 residues: Katanin p60 ATPase-containing subunit A-like 1 (490 aa).

N-acetylmethionine is present on Met-1. Residues Asp-95–Ala-184 form a disordered region. Positions Pro-116 to Met-127 are enriched in basic and acidic residues. The segment covering Ala-128–Ala-139 has biased composition (low complexity). Residues Ser-143–Met-169 show a composition bias toward basic and acidic residues. Phosphoserine is present on Ser-174. ATP is bound at residue Gly-248–Thr-255.

Belongs to the AAA ATPase family. Katanin p60 subunit A1 subfamily. A-like 1 sub-subfamily. As to quaternary structure, interacts with KATNB1 and KATNBL1.

It localises to the cytoplasm. The protein localises to the cytoskeleton. Its subcellular location is the spindle pole. It is found in the spindle. It carries out the reaction n ATP + n H2O + a microtubule = n ADP + n phosphate + (n+1) alpha/beta tubulin heterodimers.. Functionally, regulates microtubule dynamics in Sertoli cells, a process that is essential for spermiogenesis and male fertility. Severs microtubules in an ATP-dependent manner, promoting rapid reorganization of cellular microtubule arrays. Has microtubule-severing activity in vitro. The sequence is that of Katanin p60 ATPase-containing subunit A-like 1 from Papio anubis (Olive baboon).